Here is a 543-residue protein sequence, read N- to C-terminus: Zinc finger protein 852 (543 aa).

In terms of domain architecture, KRAB spans 8–82 (VAYEDLSEDY…TSGGLFGVVP (75 aa)). A Phosphoserine modification is found at serine 145. 12 C2H2-type zinc fingers span residues 159-181 (YRCD…RRIH), 187-209 (YECN…LRTH), 215-237 (YECS…QRLH), 243-265 (YKCN…QRTH), 271-293 (YECK…QFLH), 299-321 (YKCN…QRTH), 327-349 (YKCN…QSLH), 355-377 (YKCS…ERIH), 383-405 (FKCS…QRLH), 411-433 (YKCN…QRIH), 439-461 (YECN…QRTH), and 467-489 (YKCN…QRVH).

It belongs to the krueppel C2H2-type zinc-finger protein family.

It localises to the nucleus. Its function is as follows. May be involved in transcriptional regulation. This chain is Zinc finger protein 852 (ZNF852), found in Homo sapiens (Human).